Consider the following 191-residue polypeptide: Sec-independent protein translocase protein TatB (191 aa).

Residues methionine 1 to glycine 21 form a helical membrane-spanning segment. Residues glutamate 119–alanine 138 show a composition bias toward polar residues. Disordered regions lie at residues glutamate 119–threonine 139 and aspartate 168–alanine 191. Residues proline 181 to alanine 191 show a composition bias toward basic and acidic residues.

The protein belongs to the TatB family. As to quaternary structure, the Tat system comprises two distinct complexes: a TatABC complex, containing multiple copies of TatA, TatB and TatC subunits, and a separate TatA complex, containing only TatA subunits. Substrates initially bind to the TatABC complex, which probably triggers association of the separate TatA complex to form the active translocon.

Its subcellular location is the cell inner membrane. Its function is as follows. Part of the twin-arginine translocation (Tat) system that transports large folded proteins containing a characteristic twin-arginine motif in their signal peptide across membranes. Together with TatC, TatB is part of a receptor directly interacting with Tat signal peptides. TatB may form an oligomeric binding site that transiently accommodates folded Tat precursor proteins before their translocation. This chain is Sec-independent protein translocase protein TatB, found in Pasteurella multocida (strain Pm70).